Here is a 135-residue protein sequence, read N- to C-terminus: Interleukin-4 (135 aa).

The signal sequence occupies residues 1-24; the sequence is MGLTYQLIPVLVCLLVCTSHFAHG. Cystine bridges form between Cys27/Cys135, Cys48/Cys85, and Cys70/Cys105. The N-linked (GlcNAc...) asparagine glycan is linked to Asn62.

It belongs to the IL-4/IL-13 family.

Its subcellular location is the secreted. In terms of biological role, participates in at least several B-cell activation processes as well as of other cell types. It is a costimulator of DNA-synthesis. It induces the expression of class II MHC molecules on resting B-cells. It enhances both secretion and cell surface expression of IgE and IgG1. It also regulates the expression of the low affinity Fc receptor for IgE (CD23) on both lymphocytes and monocytes. Positively regulates IL31RA expression in macrophages. Stimulates autophagy in dendritic cells by interfering with mTORC1 signaling and through the induction of RUFY4. In Boselaphus tragocamelus (Nilgai), this protein is Interleukin-4 (IL4).